The chain runs to 266 residues: GTP-binding protein Rhes (266 aa).

Residue 26–33 (GASRVGKS) participates in GTP binding. Positions 48 to 56 (YTPTIEDFH) match the Effector region motif. GTP-binding positions include 73-77 (DTSGN) and 140-143 (NKND). An interaction with GNB1, GNB2 and GNB3 region spans residues 189 to 235 (MAKLPHEMSPALHHKISVQYGDAFHPRPFCMRRTKVAGAYGMVSPFA). Cysteine methyl ester is present on Cys263. The S-farnesyl cysteine moiety is linked to residue Cys263. The propeptide at 264 to 266 (SIQ) is removed in mature form.

The protein belongs to the small GTPase superfamily. RasD family. In terms of assembly, monomer (Potential). Interacts with PIK3CA and UBE2I. Interacts with GNB1, GNB2 and GNB3. Post-translationally, farnesylated. Farnesylation is required for membrane targeting. Highly expressed in brain; prominently in the striatum and weakly in kidney, thyroid, lung, heart and testis. Not expressed in liver. Expressed in pancreatic cell lines and in a embryonic stem cell line.

Its subcellular location is the cell membrane. In terms of biological role, GTPase signaling protein that binds to and hydrolyzes GTP. Regulates signaling pathways involving G-proteins-coupled receptor and heterotrimeric proteins such as GNB1, GNB2 and GNB3. May be involved in selected striatal competencies, mainly locomotor activity and motor coordination. The sequence is that of GTP-binding protein Rhes (Rasd2) from Mus musculus (Mouse).